We begin with the raw amino-acid sequence, 88 residues long: Large ribosomal subunit protein eL37 (88 aa).

Zn(2+) contacts are provided by Cys-17, Cys-20, Cys-32, and Cys-35. A C4-type zinc finger spans residues Cys-17 to Cys-35.

It belongs to the eukaryotic ribosomal protein eL37 family. Zn(2+) serves as cofactor.

In terms of biological role, binds to the 23S rRNA. The sequence is that of Large ribosomal subunit protein eL37 (RPL37) from Candida albicans (Yeast).